A 518-amino-acid polypeptide reads, in one-letter code: E3 ubiquitin-protein ligase TRIM39 (518 aa).

The RING-type zinc-finger motif lies at 29 to 70; sequence CSVCLEYLKEPVIIECGHNFCKACITRWWEDLERDFPCPVCR. Residues 102-143 form a B box-type zinc finger; sequence RDESLCPQHHEALSLFCYEDQEAVCLICAISHTHRAHTVVPL. Residues Cys-107, His-110, Cys-129, and His-135 each contribute to the Zn(2+) site. The stretch at 181-250 forms a coiled coil; the sequence is ELKRLVESRR…AHLAAEVEGK (70 aa). Interaction with CDKN1A stretches follow at residues 268–337 and 389–518; these read KNIP…QLIA and TSGR…TDWE. Positions 319–514 constitute a B30.2/SPRY domain; it reads SNFPRQYFAL…NAAPLTIRPP (196 aa).

Belongs to the TRIM/RBCC family. Interacts with MOAP1. Interacts with CDKN1A. Post-translationally, autoubiquitinated.

Its subcellular location is the cytoplasm. The protein resides in the cytosol. It localises to the mitochondrion. The protein localises to the nucleus. It carries out the reaction S-ubiquitinyl-[E2 ubiquitin-conjugating enzyme]-L-cysteine + [acceptor protein]-L-lysine = [E2 ubiquitin-conjugating enzyme]-L-cysteine + N(6)-ubiquitinyl-[acceptor protein]-L-lysine.. The protein operates within protein modification; protein ubiquitination. E3 ubiquitin-protein ligase. May facilitate apoptosis by inhibiting APC/C-Cdh1-mediated poly-ubiquitination and subsequent proteasome-mediated degradation of the pro-apoptotic protein MOAP1. Regulates the G1/S transition of the cell cycle and DNA damage-induced G2 arrest by stabilizing CDKN1A/p21. Positively regulates CDKN1A/p21 stability by competing with DTL for CDKN1A/p21 binding, therefore disrupting DCX(DTL) E3 ubiquitin ligase complex-mediated CDKN1A/p21 ubiquitination and degradation. This chain is E3 ubiquitin-protein ligase TRIM39 (TRIM39), found in Pan troglodytes (Chimpanzee).